Here is a 115-residue protein sequence, read N- to C-terminus: Protein Rev (115 aa).

2 positions are modified to phosphoserine; by host CK2: S5 and S8. Residues 18–26 form a homomultimerization region; it reads LIKFLYQSN. A disordered region spans residues 23–48; sequence YQSNPPPSSEGTRQARRNRRRRWRER. The Nuclear localization signal and RNA-binding (RRE) motif lies at 34 to 50; the sequence is TRQARRNRRRRWRERQR. A compositionally biased stretch (basic residues) spans 36-48; the sequence is QARRNRRRRWRER. Positions 73–83 match the Nuclear export signal and binding to XPO1 motif; sequence LQLPPQRLTLD. A disordered region spans residues 89-115; it reads GTSGTQGVGSPQILVESPTVLESGTKE. A phosphoserine; by host mark is found at S91 and S98.

It belongs to the HIV-1 REV protein family. Homomultimer; when bound to the RRE. Multimeric assembly is essential for activity and may involve XPO1. Binds to human KPNB1, XPO1, TNPO1, RANBP5 and IPO7. Interacts with the viral Integrase. Interacts with human KHDRBS1. Interacts with human NAP1; this interaction decreases Rev multimerization and stimulates its activity. Interacts with human DEAD-box helicases DDX3 and DDX24; these interactions may serve for viral RNA export to the cytoplasm and packaging, respectively. Interacts with human PSIP1; this interaction may inhibit HIV-1 DNA integration by promoting dissociation of the Integrase-LEDGF/p75 complex. Post-translationally, asymmetrically arginine dimethylated at one site by host PRMT6. Methylation impairs the RNA-binding activity and export of viral RNA from the nucleus to the cytoplasm. Phosphorylated by protein kinase CK2. Presence of, and maybe binding to the N-terminus of the regulatory beta subunit of CK2 is necessary for CK2-mediated Rev's phosphorylation.

It is found in the host nucleus. The protein resides in the host nucleolus. Its subcellular location is the host cytoplasm. Escorts unspliced or incompletely spliced viral pre-mRNAs (late transcripts) out of the nucleus of infected cells. These pre-mRNAs carry a recognition sequence called Rev responsive element (RRE) located in the env gene, that is not present in fully spliced viral mRNAs (early transcripts). This function is essential since most viral proteins are translated from unspliced or partially spliced pre-mRNAs which cannot exit the nucleus by the pathway used by fully processed cellular mRNAs. Rev itself is translated from a fully spliced mRNA that readily exits the nucleus. Rev's nuclear localization signal (NLS) binds directly to KPNB1/Importin beta-1 without previous binding to KPNA1/Importin alpha-1. KPNB1 binds to the GDP bound form of RAN (Ran-GDP) and targets Rev to the nucleus. In the nucleus, the conversion from Ran-GDP to Ran-GTP dissociates Rev from KPNB1 and allows Rev's binding to the RRE in viral pre-mRNAs. Rev multimerization on the RRE via cooperative assembly exposes its nuclear export signal (NES) to the surface. Rev can then form a complex with XPO1/CRM1 and Ran-GTP, leading to nuclear export of the complex. Conversion from Ran-GTP to Ran-GDP mediates dissociation of the Rev/RRE/XPO1/RAN complex, so that Rev can return to the nucleus for a subsequent round of export. Beside KPNB1, also seems to interact with TNPO1/Transportin-1, RANBP5/IPO5 and IPO7/RANBP7 for nuclear import. The nucleoporin-like HRB/RIP is an essential cofactor that probably indirectly interacts with Rev to release HIV RNAs from the perinuclear region to the cytoplasm. The protein is Protein Rev of Human immunodeficiency virus type 1 group M subtype B (isolate MN) (HIV-1).